Reading from the N-terminus, the 259-residue chain is Polycomb group RING finger protein 1 (259 aa).

Alanine 2 is subject to N-acetylalanine. Residue serine 3 is modified to Phosphoserine. Residue lysine 24 forms a Glycyl lysine isopeptide (Lys-Gly) (interchain with G-Cter in SUMO2) linkage. The segment at 47–86 (CCLCAGYFVDATTITECLHTFCKSCIVKYLQTSKYCPMCN) adopts an RING-type zinc-finger fold. Residues 86–247 (NIKIHETQPL…LSHWFGKPSP (162 aa)) form a necessary for repressor activity region. Residue lysine 88 forms a Glycyl lysine isopeptide (Lys-Gly) (interchain with G-Cter in SUMO2) linkage. The segment at 150–255 (LPFSSFDHSK…SPLLLQYSVK (106 aa)) is required for the interaction with the KDM2B-SKP1 heterodimeric complex. Residues 167–255 (EQLSLCLERL…SPLLLQYSVK (89 aa)) are RING-finger and WD40-associated ubiquitin-like domain (RAWUL); sufficient for interaction with BCOR and BCORL1.

As to quaternary structure, interacts with BCORL1, forming heterodimers. The PCGF1-BCORL1 heterodimeric complex interacts with the KDM2B-SKP1 heterodimeric complex to form a homotetrameric polycomb repression complex 1 (PRC1.1). Component of the repressive BCOR complex containing a Polycomb group subcomplex at least composed of RYBP, RING1 and RNF2/RING2. Specifically interacts with BCOR, RING1 and RNF2/RING2. Component of a PRC1-like complex. Interacts with CBX6, CBX7 and CBX8. Interacts with DPPA4, NANOG, POU5F1 and RYBP.

Its subcellular location is the nucleus. In terms of biological role, component of the Polycomb group (PcG) multiprotein BCOR complex, a complex required to maintain the transcriptionally repressive state of some genes, such as BCL6 and the cyclin-dependent kinase inhibitor, CDKN1A. Transcriptional repressor that may be targeted to the DNA by BCL6; this transcription repressor activity may be related to PKC signaling pathway. Represses CDKN1A expression by binding to its promoter, and this repression is dependent on the retinoic acid response element (RARE element). Promotes cell cycle progression and enhances cell proliferation as well. May have a positive role in tumor cell growth by down-regulating CDKN1A. Component of a Polycomb group (PcG) multiprotein PRC1-like complex, a complex class required to maintain the transcriptionally repressive state of many genes, including Hox genes, throughout development. PcG PRC1 complex acts via chromatin remodeling and modification of histones; it mediates monoubiquitination of histone H2A 'Lys-119', rendering chromatin heritably changed in its expressibility. Within the PRC1-like complex, regulates RNF2 ubiquitin ligase activity. Regulates the expression of DPPA4 and NANOG in the NT2 embryonic carcinoma cells. This chain is Polycomb group RING finger protein 1 (PCGF1), found in Bos taurus (Bovine).